A 345-amino-acid chain; its full sequence is Ferrochelatase (345 aa).

Residues His215 and Glu296 each contribute to the Fe cation site.

Belongs to the ferrochelatase family.

The protein resides in the cytoplasm. The enzyme catalyses heme b + 2 H(+) = protoporphyrin IX + Fe(2+). Its pathway is porphyrin-containing compound metabolism; protoheme biosynthesis; protoheme from protoporphyrin-IX: step 1/1. Its function is as follows. Catalyzes the ferrous insertion into protoporphyrin IX. This is Ferrochelatase from Rhodopseudomonas palustris (strain ATCC BAA-98 / CGA009).